The sequence spans 137 residues: Methylglyoxal synthase (137 aa).

One can recognise an MGS-like domain in the interval 1–137 (MKIALIAHDK…DLLRGEEPNV (137 aa)). Residues histidine 8, lysine 12, 34–37 (TGTT), and 54–55 (SG) contribute to the substrate site. The active-site Proton donor/acceptor is aspartate 60. Histidine 87 provides a ligand contact to substrate.

Belongs to the methylglyoxal synthase family.

The catalysed reaction is dihydroxyacetone phosphate = methylglyoxal + phosphate. Functionally, catalyzes the formation of methylglyoxal from dihydroxyacetone phosphate. This is Methylglyoxal synthase from Bacillus subtilis (strain 168).